Consider the following 104-residue polypeptide: Conantokin-P (104 aa).

Residues 1-26 (MQLYTYLYLLVPLVTFHLILSTGTLA) form the signal peptide. Positions 27–80 (HGGTLTERRSTDTTALKPEPVLLQKSDARSTDDNDKDRLTQMKRILKKRGNKAR) are excised as a propeptide. The segment at 29–87 (GTLTERRSTDTTALKPEPVLLQKSDARSTDDNDKDRLTQMKRILKKRGNKARGEEEHSK) is disordered. Over residues 52-66 (SDARSTDDNDKDRLT) the composition is skewed to basic and acidic residues. Glutamate 83, glutamate 84, glutamate 90, glutamate 94, and glutamate 103 each carry 4-carboxyglutamate. Residues glutamate 90 and glutamate 94 each contribute to the a divalent metal cation site. A disulfide bond links cysteine 91 and cysteine 104.

Belongs to the conotoxin B superfamily. In terms of tissue distribution, expressed by the venom duct.

It is found in the secreted. Its function is as follows. Conantokins inhibit N-methyl-D-aspartate (NMDA) receptors. This toxin has the highest potency for the NR2B/GRIN2B subunit, followed by NR2A/GRIN2A, NR2C/GRIN2C, and NR2D/GRIN2D subunits. In Conus purpurascens (Purple cone), this protein is Conantokin-P.